A 436-amino-acid chain; its full sequence is D-amino acid dehydrogenase (436 aa).

I3–W17 is an FAD binding site.

This sequence belongs to the DadA oxidoreductase family. It depends on FAD as a cofactor.

It catalyses the reaction a D-alpha-amino acid + A + H2O = a 2-oxocarboxylate + AH2 + NH4(+). Its pathway is amino-acid degradation; D-alanine degradation; NH(3) and pyruvate from D-alanine: step 1/1. In terms of biological role, oxidative deamination of D-amino acids. The sequence is that of D-amino acid dehydrogenase from Photorhabdus laumondii subsp. laumondii (strain DSM 15139 / CIP 105565 / TT01) (Photorhabdus luminescens subsp. laumondii).